The following is a 707-amino-acid chain: Solute carrier family 15 member 1 (707 aa).

Residues 1 to 21 form a helical membrane-spanning segment; sequence MGMSKSLSCFGYPLSIFFIVV. Topologically, residues 22–53 are extracellular; that stretch reads NEFCERFSYYGMRALLILYFRNFIGWDDNLST. A glycan (N-linked (GlcNAc...) asparagine) is linked at N50. A helical transmembrane segment spans residues 54–74; that stretch reads VIYHTFVALCYLTPILGALIA. Residues 75-82 lie on the Cytoplasmic side of the membrane; sequence DAWLGKFK. Residues 83–103 traverse the membrane as a helical segment; that stretch reads TIVWLSIVYTIGQAVTSLSSV. The Extracellular portion of the chain corresponds to 104 to 118; that stretch reads NELTDNNHDGTPDSL. Residues 119 to 139 traverse the membrane as a helical segment; sequence PVHVAVCMIGLLLIALGTGGI. Topologically, residues 140–161 are cytoplasmic; sequence KPCVSAFGGDQFEEGQEKQRNR. The helical transmembrane segment at 162–182 threads the bilayer; the sequence is FFSIFYLAINAGSLLSTIITP. The Extracellular portion of the chain corresponds to 183–198; that stretch reads MVRVQQCGIHVKQACY. A helical membrane pass occupies residues 199–219; that stretch reads PLAFGIPAILMAVSLIVFIIG. The Cytoplasmic segment spans residues 220–276; sequence SGMYKKFKPQGNILSKVVKCICFAIKNRFRHRSKQFPKRAHWLDWAKEKYDERLIAQ. The chain crosses the membrane as a helical span at residues 277 to 297; that stretch reads IKMVTRVLFLYIPLPMFWALF. At 298–327 the chain is on the extracellular side; sequence DQQGSRWTLQATTMSGRIGILEIQPDQMQT. The helical transmembrane segment at 328 to 348 threads the bilayer; the sequence is VNTILIIILVPIMDAVVYPLI. At 349–361 the chain is on the cytoplasmic side; the sequence is AKCGLNFTSLKKM. The chain crosses the membrane as a helical span at residues 362-382; that stretch reads TIGMFLASMAFVAAAILQVEI. Over 383–583 the chain is Extracellular; the sequence is DKTLPVFPKA…PPNTMNMAWQ (201 aa). The extracellular domain (ECD) stretch occupies residues 383 to 583; it reads DKTLPVFPKA…PPNTMNMAWQ (201 aa). Residues N439, N498, and N513 are each glycosylated (N-linked (GlcNAc...) asparagine). Residues 584 to 604 traverse the membrane as a helical segment; that stretch reads IPQYFLITSGEVVFSITGLEF. Residues 605-618 are Cytoplasmic-facing; the sequence is SYSQAPSNMKSVLQ. A helical membrane pass occupies residues 619-639; the sequence is AGWLLTVAVGNIIVLIVAGAG. Residues 640 to 644 are Extracellular-facing; sequence QINKQ. A helical membrane pass occupies residues 645–665; that stretch reads WAEYILFAALLLVVCVIFAIM. The Cytoplasmic portion of the chain corresponds to 666-707; that stretch reads ARFYTYVNPAEIEAQFEEDEKKKNPEKNDLYPSLAPVSQTQM. A disordered region spans residues 682–707; sequence EEDEKKKNPEKNDLYPSLAPVSQTQM. Positions 684 to 694 are enriched in basic and acidic residues; that stretch reads DEKKKNPEKND.

The protein belongs to the major facilitator superfamily. Proton-dependent oligopeptide transporter (POT/PTR) (TC 2.A.17) family. Interacts (via extracellular domain region) with trypsin. Intestine, kidney, liver and low in brain.

It localises to the apical cell membrane. It catalyses the reaction a dipeptide(out) + H(+)(out) = a dipeptide(in) + H(+)(in). The catalysed reaction is an L-amino acid tripeptide(out) + H(+)(out) = an L-amino acid tripeptide(in) + H(+)(in). The enzyme catalyses L-alanyl-L-lysine(out) + H(+)(out) = L-alanyl-L-lysine(in) + H(+)(in). It carries out the reaction L-alanyl-L-proline(out) + H(+)(out) = L-alanyl-L-proline(in) + H(+)(in). It catalyses the reaction L-alanyl-L-valine(out) + H(+)(out) = L-alanyl-L-valine(in) + H(+)(in). The catalysed reaction is carnosine(out) + H(+)(out) = carnosine(in) + H(+)(in). The enzyme catalyses glycyl-L-glutamine(out) + H(+)(out) = glycyl-L-glutamine(in) + H(+)(in). It carries out the reaction glycyl-L-leucine(out) + H(+)(out) = glycyl-L-leucine(in) + H(+)(in). It catalyses the reaction glycyl-L-proline(out) + H(+)(out) = glycyl-L-proline(in) + H(+)(in). The catalysed reaction is glycyl-sarcosine(out) + H(+)(out) = glycyl-sarcosine(in) + H(+)(in). The enzyme catalyses L-leucyl-L-leucine(out) + H(+)(out) = L-leucyl-L-leucine(in) + H(+)(in). It carries out the reaction L-leucyl-L-proline(out) + H(+)(out) = L-leucyl-L-proline(in) + H(+)(in). It catalyses the reaction L-phenylalanyl-L-leucine(out) + H(+)(out) = L-phenylalanyl-L-leucine(in) + H(+)(in). The catalysed reaction is L-phenylalanyl-L-phenylalanine(out) + H(+)(out) = L-phenylalanyl-L-phenylalanine(in) + H(+)(in). The enzyme catalyses L-lysyl-glycine(out) + H(+)(out) = L-lysyl-glycine(in) + H(+)(in). It carries out the reaction L-tyrosylglycine(out) + H(+)(out) = L-tyrosylglycine(in) + H(+)(in). It catalyses the reaction L-alanyl-L-aspartate(out) + 2 H(+)(out) = L-alanyl-L-aspartate(in) + 2 H(+)(in). The catalysed reaction is L-aspartyl-glycine(out) + 2 H(+)(out) = L-aspartyl-glycine(in) + 2 H(+)(in). The enzyme catalyses glycyl-L-aspartate(out) + 2 H(+)(out) = glycyl-L-aspartate(in) + 2 H(+)(in). It carries out the reaction glycyl-L-glutamate(out) + 2 H(+)(out) = glycyl-L-glutamate(in) + 2 H(+)(in). It catalyses the reaction L-alanyl-L-leucyl-L-alanine(out) + H(+)(out) = L-alanyl-L-leucyl-L-alanine(in) + H(+)(in). The catalysed reaction is L-alanyl-L-prolylglycine(out) + H(+)(out) = L-alanyl-L-prolylglycine(in) + H(+)(in). The enzyme catalyses glycylglycyl-L-isoleucine(out) + H(+)(out) = glycylglycyl-L-isoleucine(in) + H(+)(in). It carries out the reaction glycylglycyl-L-proline(out) + H(+)(out) = glycylglycyl-L-proline(in) + H(+)(in). It catalyses the reaction L-methionyl-L-phenylalanyl-L-methionine(out) + H(+)(out) = L-methionyl-L-phenylalanyl-L-methionine(in) + H(+)(in). The catalysed reaction is N-acetyl-D-muramoyl-L-alanyl-D-isoglutamine(out) + 2 H(+)(out) = N-acetyl-D-muramoyl-L-alanyl-D-isoglutamine(in) + 2 H(+)(in). The enzyme catalyses N(alpha)-formyl-L-methionyl-L-leucyl-L-phenylalanine(out) + 2 H(+)(out) = N(alpha)-formyl-L-methionyl-L-leucyl-L-phenylalanine(in) + 2 H(+)(in). Electrogenic proton-coupled amino-acid transporter that transports oligopeptides of 2 to 4 amino acids with a preference for dipeptides. Transports neutral and monovalently charged peptides with a proton to peptide stoichiometry of 1:1 or 2:1. Primarily responsible for the absorption of dietary di- and tripeptides from the small intestinal lumen. Mediates transepithelial transport of muramyl and N-formylated bacterial dipeptides contributing to recognition of pathogenic bacteria by the mucosal immune system. This chain is Solute carrier family 15 member 1 (SLC15A1), found in Oryctolagus cuniculus (Rabbit).